Here is a 471-residue protein sequence, read N- to C-terminus: UDP-N-acetylmuramate--L-alanine ligase (471 aa).

Residue 114 to 120 participates in ATP binding; that stretch reads GTHGKTT.

Belongs to the MurCDEF family.

The protein resides in the cytoplasm. The enzyme catalyses UDP-N-acetyl-alpha-D-muramate + L-alanine + ATP = UDP-N-acetyl-alpha-D-muramoyl-L-alanine + ADP + phosphate + H(+). The protein operates within cell wall biogenesis; peptidoglycan biosynthesis. Cell wall formation. The sequence is that of UDP-N-acetylmuramate--L-alanine ligase from Rhizobium meliloti (strain 1021) (Ensifer meliloti).